A 771-amino-acid polypeptide reads, in one-letter code: Probable exo-1,4-beta-xylosidase bxlB (771 aa).

Positions 1 to 25 (MAHITSWHYGNAIALLVSLAPGALS) are cleaved as a signal peptide. N-linked (GlcNAc...) asparagine glycosylation occurs at N67. Residue D293 is part of the active site. 4 N-linked (GlcNAc...) asparagine glycosylation sites follow: N305, N345, N423, and N464.

The protein belongs to the glycosyl hydrolase 3 family.

The protein localises to the secreted. It catalyses the reaction Hydrolysis of (1-&gt;4)-beta-D-xylans, to remove successive D-xylose residues from the non-reducing termini.. The protein operates within glycan degradation; xylan degradation. In terms of biological role, xylan 1,4-beta-xylosidase involved in the hydrolysis of xylan, a major structural heterogeneous polysaccharide found in plant biomass representing the second most abundant polysaccharide in the biosphere, after cellulose. In Aspergillus fumigatus (strain CBS 144.89 / FGSC A1163 / CEA10) (Neosartorya fumigata), this protein is Probable exo-1,4-beta-xylosidase bxlB (bxlB).